Here is a 486-residue protein sequence, read N- to C-terminus: Glycogen synthase 2 (486 aa).

Residue Lys-15 participates in ADP-alpha-D-glucose binding.

This sequence belongs to the glycosyltransferase 1 family. Bacterial/plant glycogen synthase subfamily.

It carries out the reaction [(1-&gt;4)-alpha-D-glucosyl](n) + ADP-alpha-D-glucose = [(1-&gt;4)-alpha-D-glucosyl](n+1) + ADP + H(+). The protein operates within glycan biosynthesis; glycogen biosynthesis. In terms of biological role, synthesizes alpha-1,4-glucan chains using ADP-glucose. The chain is Glycogen synthase 2 (glgA2) from Rhizobium meliloti (strain 1021) (Ensifer meliloti).